A 356-amino-acid polypeptide reads, in one-letter code: Dihydroorotate dehydrogenase (quinone) (356 aa).

Residues 66–70 and T90 contribute to the FMN site; that span reads AGFDK. K70 serves as a coordination point for substrate. 115-119 lines the substrate pocket; the sequence is NRMGF. The FMN site is built by N143 and N176. Residue N176 participates in substrate binding. S179 (nucleophile) is an active-site residue. Position 181 (N181) interacts with substrate. Residues K212 and T240 each coordinate FMN. A substrate-binding site is contributed by 241-242; the sequence is NT. FMN-binding positions include G264, G293, and 314-315; that span reads YT.

It belongs to the dihydroorotate dehydrogenase family. Type 2 subfamily. Monomer. The cofactor is FMN.

It is found in the cell membrane. The catalysed reaction is (S)-dihydroorotate + a quinone = orotate + a quinol. The protein operates within pyrimidine metabolism; UMP biosynthesis via de novo pathway; orotate from (S)-dihydroorotate (quinone route): step 1/1. In terms of biological role, catalyzes the conversion of dihydroorotate to orotate with quinone as electron acceptor. The sequence is that of Dihydroorotate dehydrogenase (quinone) (pyrD) from Mycobacterium leprae (strain TN).